Reading from the N-terminus, the 211-residue chain is MKLMICTSNKKKFEEISSILESLKKDENLDLEFVKPPKEIEVEEYANTFLSNAYLKAKAYYNAFGIPALADDSGLVVEAFSDNLERPGVYSARFYKDSFGSHVLKEEDFKLSKDELNNLKVLRLLEKEENRKAKFVSVVAIVLSNNYGIFGEGELKGHIAKEPFGNFGFGYDPIFIPEGYNTTLANIENKDKISHRRQALEAVFFMLKKML.

A substrate-binding site is contributed by 7–12 (TSNKKK). 2 residues coordinate Mg(2+): Glu43 and Asp72. Catalysis depends on Asp72, which acts as the Proton acceptor. Substrate-binding positions include Ser73, 169–172 (FGYD), Lys190, and 195–196 (HR).

Belongs to the HAM1 NTPase family. Homodimer. It depends on Mg(2+) as a cofactor.

The enzyme catalyses XTP + H2O = XMP + diphosphate + H(+). The catalysed reaction is dITP + H2O = dIMP + diphosphate + H(+). It catalyses the reaction ITP + H2O = IMP + diphosphate + H(+). Functionally, pyrophosphatase that catalyzes the hydrolysis of nucleoside triphosphates to their monophosphate derivatives, with a high preference for the non-canonical purine nucleotides XTP (xanthosine triphosphate), dITP (deoxyinosine triphosphate) and ITP. Seems to function as a house-cleaning enzyme that removes non-canonical purine nucleotides from the nucleotide pool, thus preventing their incorporation into DNA/RNA and avoiding chromosomal lesions. The sequence is that of dITP/XTP pyrophosphatase from Hydrogenobaculum sp. (strain Y04AAS1).